A 264-amino-acid chain; its full sequence is Zinc import ATP-binding protein ZnuC (264 aa).

In terms of domain architecture, ABC transporter spans 11 to 226 (IELKGVNVTF…PVFIRFFGNQ (216 aa)). 43–50 (GPNGGGKS) serves as a coordination point for ATP.

Belongs to the ABC transporter superfamily. Zinc importer (TC 3.A.1.15.5) family. In terms of assembly, the complex is composed of two ATP-binding proteins (ZnuC), two transmembrane proteins (ZnuB) and a solute-binding protein (ZnuA).

The protein localises to the cell inner membrane. It carries out the reaction Zn(2+)(out) + ATP(in) + H2O(in) = Zn(2+)(in) + ADP(in) + phosphate(in) + H(+)(in). Functionally, part of the ABC transporter complex ZnuABC involved in zinc import. Responsible for energy coupling to the transport system. This Histophilus somni (strain 129Pt) (Haemophilus somnus) protein is Zinc import ATP-binding protein ZnuC.